A 261-amino-acid chain; its full sequence is MAEHTEETNLLQPTSRFQLLKDILGLYPAIDGEKHKSTLGTAGWLRAGVLGANDAIVSVAASNSQGQVLIAALAALFAGALSMAVGEYVSVASQKDMEDADLEKERWELENNPEGELEELSLLYQERGVDPVTATEVARQLMAKDALQAHAIEELGIRDFSQARPFAAGMVSFAMFITFGCIPLLVGAWIPYRWYAIGAITGVSLILLAISGAVGAFFGGANMLLGAFRVTYGGALAMAITIGVGFLSETLNISDMSYRDE.

A helical membrane pass occupies residues 66 to 86 (GQVLIAALAALFAGALSMAVG). The Fe cation site is built by Glu-105, Glu-108, Glu-116, Glu-119, and Glu-154. The next 3 helical transmembrane spans lie at 170-190 (MVSF…GAWI), 197-217 (IGAI…VGAF), and 233-253 (GGAL…TLNI).

The protein belongs to the CCC1 family.

The protein resides in the vacuole membrane. The enzyme catalyses Fe(2+)(in) = Fe(2+)(out). In terms of biological role, vacuolar iron transporter involved in the transfer of iron ions from the cytosol to the vacuole for intracellular iron storage. This chain is Vacuolar iron transporter, found in Acanthamoeba castellanii (strain ATCC 30010 / Neff).